A 168-amino-acid polypeptide reads, in one-letter code: uncharacterized protein (168 aa).

The chain crosses the membrane as a helical span at residues 23 to 47 (LFARASIIGVALLLSACATVPMASV).

It is found in the membrane. This is an uncharacterized protein from Haemophilus influenzae (strain ATCC 51907 / DSM 11121 / KW20 / Rd).